The following is a 175-amino-acid chain: Phosphatidylglycerol/phosphatidylinositol transfer protein (175 aa).

The signal sequence occupies residues Met1–Ala21. Positions Arg22–Gln37 are excised as a propeptide.

Belongs to the NPC2 family. Monomer.

Its subcellular location is the cytoplasm. The protein localises to the cytoplasmic vesicle. It is found in the golgi apparatus. Its function is as follows. Catalyzes the intermembrane transfer of phosphatidylglycerol and phosphatidylinositol. This is Phosphatidylglycerol/phosphatidylinositol transfer protein (pltp) from Aspergillus oryzae (strain ATCC 42149 / RIB 40) (Yellow koji mold).